A 147-amino-acid polypeptide reads, in one-letter code: Large ribosomal subunit protein uL15 (147 aa).

The interval 1-46 (MSIRLENLSYTPGARKEKHRKGRGHAAGKGKQAGRGQSGQKKRSTV) is disordered. A compositionally biased stretch (basic residues) spans 16 to 28 (KEKHRKGRGHAAG).

It belongs to the universal ribosomal protein uL15 family. Part of the 50S ribosomal subunit.

Binds to the 23S rRNA. This is Large ribosomal subunit protein uL15 from Mesomycoplasma hyopneumoniae (strain 7448) (Mycoplasma hyopneumoniae).